A 252-amino-acid chain; its full sequence is Adenosylcobinamide-GDP ribazoletransferase (252 aa).

5 helical membrane passes run 33 to 53 (FISP…VVLL), 105 to 125 (TGSG…IATL), 132 to 152 (LWFF…LLGL), 184 to 204 (FAIL…LLVF), and 215 to 235 (MSGD…LLVA).

It belongs to the CobS family. The cofactor is Mg(2+).

The protein resides in the cell membrane. The enzyme catalyses alpha-ribazole + adenosylcob(III)inamide-GDP = adenosylcob(III)alamin + GMP + H(+). It catalyses the reaction alpha-ribazole 5'-phosphate + adenosylcob(III)inamide-GDP = adenosylcob(III)alamin 5'-phosphate + GMP + H(+). The protein operates within cofactor biosynthesis; adenosylcobalamin biosynthesis; adenosylcobalamin from cob(II)yrinate a,c-diamide: step 7/7. Its function is as follows. Joins adenosylcobinamide-GDP and alpha-ribazole to generate adenosylcobalamin (Ado-cobalamin). Also synthesizes adenosylcobalamin 5'-phosphate from adenosylcobinamide-GDP and alpha-ribazole 5'-phosphate. The chain is Adenosylcobinamide-GDP ribazoletransferase from Sulfolobus acidocaldarius (strain ATCC 33909 / DSM 639 / JCM 8929 / NBRC 15157 / NCIMB 11770).